We begin with the raw amino-acid sequence, 85 residues long: Kunitz-type serine protease inhibitor homolog beta-bungarotoxin B1 chain (85 aa).

An N-terminal signal peptide occupies residues 1-24 (MSSGGLLLLLGLLTLCAELTPVSS). Residues 31 to 81 (CDKPPDKGNCGSVRRAFYYDTRLKTCKAFPYRGCNGNGNHFKTETLCRCEC) form the BPTI/Kunitz inhibitor domain. 3 cysteine pairs are disulfide-bonded: cysteine 31–cysteine 81, cysteine 40–cysteine 64, and cysteine 56–cysteine 77.

Belongs to the venom Kunitz-type family. As to quaternary structure, heterodimer; disulfide-linked. The A chain has phospholipase A2 activity and the B chain shows homology with the basic protease inhibitors. In terms of tissue distribution, expressed by the venom gland.

It is found in the secreted. Functionally, beta-bungarotoxin is a presynaptic neurotoxin of the venom. The B chain is homologous to venom basic protease inhibitors but has no protease inhibitor activity and is non-toxic. This Bungarus candidus (Malayan krait) protein is Kunitz-type serine protease inhibitor homolog beta-bungarotoxin B1 chain.